The chain runs to 201 residues: Cell division protein SepF (201 aa).

Positions 27-38 are enriched in basic and acidic residues; sequence VQERTSVQRDSR. The tract at residues 27–99 is disordered; sequence VQERTSVQRD…PRIQNKDSVR (73 aa). Polar residues-rich tracts occupy residues 43–54 and 82–92; these read QEASQRSHMTNS and DNSYQQATPRI.

Belongs to the SepF family. In terms of assembly, homodimer. Interacts with FtsZ.

The protein localises to the cytoplasm. Its function is as follows. Cell division protein that is part of the divisome complex and is recruited early to the Z-ring. Probably stimulates Z-ring formation, perhaps through the cross-linking of FtsZ protofilaments. Its function overlaps with FtsA. The sequence is that of Cell division protein SepF from Streptococcus agalactiae serotype III (strain NEM316).